The primary structure comprises 213 residues: Ras-related protein Rab-39B (213 aa).

Ser17, Gly20, Lys21, Ser22, Cys23, Ser37, and Thr40 together coordinate GTP. Ser22 contributes to the Mg(2+) binding site. Residues 35-43 (QVSDPTVGV) form a switch-I region. 2 residues coordinate Mg(2+): Thr40 and Asp64. GTP-binding residues include Gly67, His123, Lys124, Asp126, Ala154, and Arg155. A switch-II region spans residues 67 to 83 (GQERFRSITRAYYRNSV). Residue Ser201 is modified to Phosphoserine. Residues Cys211 and Cys213 are each lipidated (S-geranylgeranyl cysteine). Cys213 bears the Cysteine methyl ester mark.

This sequence belongs to the small GTPase superfamily. Rab family. As to quaternary structure, interacts (GDP-bound) with C9orf72; C9orf72 in complex with SMCR8 acts as a GEF for RAB39B. Interacts (in GTP-bound form) with PICK1 (via PDZ domain); a PICK1 homodimer may allow simultaneous association of RAB39B and GRIA2 to PICK1 which is involved in GRIA2 trafficking. Interacts with isoform c of RASSF1; the interaction is strong. Interacts with isoform a of RASSF1; the interaction is weak. Interacts with the DLG4/PSD-95. Interacts (GTP-bound) with HOPS complex components VPS39 and VPS41. It depends on Mg(2+) as a cofactor. Specifically expressed in neuron and neuronal precursors in the brain. Expression is high in all regions of the brain with highest levels observed in the hippocampus.

The protein resides in the cell membrane. The protein localises to the cytoplasmic vesicle membrane. It localises to the golgi apparatus. Its subcellular location is the cytoplasmic vesicle. It is found in the autophagosome membrane. The protein resides in the autolysosome membrane. It carries out the reaction GTP + H2O = GDP + phosphate + H(+). Its activity is regulated as follows. Regulated by guanine nucleotide exchange factors (GEFs) including C9orf72-SMCR8 complex, which promote the exchange of bound GDP for free GTP. Regulated by GTPase activating proteins (GAPs) which increase the GTP hydrolysis activity. Inhibited by GDP dissociation inhibitors (GDIs). Functionally, the small GTPases Rab are key regulators of intracellular membrane trafficking, from the formation of transport vesicles to their fusion with membranes. Rabs cycle between an inactive GDP-bound form and an active GTP-bound form that is able to recruit to membranes different sets of downstream effectors directly responsible for vesicle formation, movement, tethering and fusion. RAB39B is involved in autophagy and may function in autophagosome formation. Binds downstream effector PICK1 to ensure selectively GRIA2 exit from the endoplasmic reticulum to the Golgi and to regulate AMPAR composition at the post-synapses and thus synaptic transmission. May regulate the homeostasis of SNCA/alpha-synuclein. The polypeptide is Ras-related protein Rab-39B (Mus musculus (Mouse)).